Here is a 486-residue protein sequence, read N- to C-terminus: Kynureninase 1 (486 aa).

The disordered stretch occupies residues 53 to 72 (DLKRTTLDPNQEPEHSPTPS). Pyridoxal 5'-phosphate is bound by residues leucine 146, threonine 147, 174-177 (FPSD), serine 231, aspartate 260, histidine 263, and tyrosine 285. Position 286 is an N6-(pyridoxal phosphate)lysine (lysine 286). Tryptophan 326 and asparagine 354 together coordinate pyridoxal 5'-phosphate.

Belongs to the kynureninase family. In terms of assembly, homodimer. Pyridoxal 5'-phosphate serves as cofactor.

The protein resides in the cytoplasm. The enzyme catalyses L-kynurenine + H2O = anthranilate + L-alanine + H(+). The catalysed reaction is 3-hydroxy-L-kynurenine + H2O = 3-hydroxyanthranilate + L-alanine + H(+). It participates in amino-acid degradation; L-kynurenine degradation; L-alanine and anthranilate from L-kynurenine: step 1/1. The protein operates within cofactor biosynthesis; NAD(+) biosynthesis; quinolinate from L-kynurenine: step 2/3. Catalyzes the cleavage of L-kynurenine (L-Kyn) and L-3-hydroxykynurenine (L-3OHKyn) into anthranilic acid (AA) and 3-hydroxyanthranilic acid (3-OHAA), respectively. This chain is Kynureninase 1 (bna5-1), found in Aspergillus clavatus (strain ATCC 1007 / CBS 513.65 / DSM 816 / NCTC 3887 / NRRL 1 / QM 1276 / 107).